We begin with the raw amino-acid sequence, 377 residues long: Histone deacetylase 8 (377 aa).

The histone deacetylase stretch occupies residues 14-324 (LPPVYIYSPE…WTYLTGVILG (311 aa)). Ser-39 carries the phosphoserine modification. Substrate is bound at residue Asp-101. His-143 functions as the Proton acceptor in the catalytic mechanism. Substrate is bound at residue Gly-151. Residues Asp-178, His-180, and Asp-267 each coordinate a divalent metal cation. Substrate is bound at residue Tyr-306.

It belongs to the histone deacetylase family. HD type 1 subfamily. In terms of assembly, interacts with CBFA2T3. Interacts with phosphorylated SMG5/EST1B; this interaction protects SMG5 from ubiquitin-mediated degradation. Associates with alpha-SMA (smooth muscle alpha-actin). It depends on a divalent metal cation as a cofactor. Post-translationally, phosphorylated by PKA on serine 39. Phosphorylation reduces deacetylase activity observed preferentially on histones H3 and H4.

The protein resides in the nucleus. The protein localises to the chromosome. It is found in the cytoplasm. The catalysed reaction is N(6)-acetyl-L-lysyl-[histone] + H2O = L-lysyl-[histone] + acetate. It carries out the reaction N(6)-acetyl-L-lysyl-[protein] + H2O = L-lysyl-[protein] + acetate. It catalyses the reaction N(6)-(2E)-butenoyl-L-lysyl-[protein] + H2O = (2E)-2-butenoate + L-lysyl-[protein]. Its activity is regulated as follows. Its activity is inhibited by trichostatin A (TSA) and butyrate, 2 well known histone deacetylase inhibitors. Its function is as follows. Histone deacetylase that catalyzes the deacetylation of lysine residues on the N-terminal part of the core histones (H2A, H2B, H3 and H4). Histone deacetylation gives a tag for epigenetic repression and plays an important role in transcriptional regulation, cell cycle progression and developmental events. Histone deacetylases act via the formation of large multiprotein complexes. Also involved in the deacetylation of cohesin complex protein SMC3 regulating release of cohesin complexes from chromatin. May play a role in smooth muscle cell contractility. In addition to protein deacetylase activity, also has protein-lysine deacylase activity: acts as a protein decrotonylase by mediating decrotonylation ((2E)-butenoyl) of histones. The protein is Histone deacetylase 8 (Hdac8) of Rattus norvegicus (Rat).